A 548-amino-acid chain; its full sequence is Synaptic vesicle 2-related protein (548 aa).

At 1-87 (MEEDLFQLRQ…GFGKFQWKLS (87 aa)) the chain is on the cytoplasmic side. Phosphoserine is present on residues serine 25 and serine 31. A helical membrane pass occupies residues 88–108 (VLTGLAWMADAMEMMILSILA). At 109-122 (PQLHCEWRLPSWQV) the chain is on the vesicular side. The chain crosses the membrane as a helical span at residues 123–143 (ALLTSVVFVGMMSSSTLWGNI). Residues 144–156 (SDQYGRKTGLKIS) are Cytoplasmic-facing. A helical transmembrane segment spans residues 157–177 (VLWTLYYGILSAFAPVYSWIL). Residues 178–180 (VLR) lie on the Vesicular side of the membrane. A helical transmembrane segment spans residues 181 to 201 (GLVGFGIGGVPQSVTLYAEFL). At 202-209 (PMKARAKC) the chain is on the cytoplasmic side. A helical transmembrane segment spans residues 210 to 230 (ILLIEVFWAIGTVFEVVLAVF). At 231–238 (VMPSLGWR) the chain is on the vesicular side. A helical transmembrane segment spans residues 239-259 (WLLILSAVPLLLFAVLCFWLP). The Cytoplasmic portion of the chain corresponds to 260 to 316 (ESARYDVLSGNQEKAIATLKRIATENGAPMPLGKLIISRQEDRGKMRDLFTPHFRWT). A helical membrane pass occupies residues 317-337 (TLLLWFIWFSNAFSYYGLVLL). At 338-373 (TTELFQAGDVCSISSRKKAVEAKCSLACEYLSEEDY) the chain is on the vesicular side. The chain crosses the membrane as a helical span at residues 374 to 394 (MDLLWTTLSEFPGVLVTLWII). Topologically, residues 395–401 (DRLGRKK) are cytoplasmic. A helical membrane pass occupies residues 402–422 (TMALCFVVFSFCSLLLFICVG). At 423-425 (RNM) the chain is on the vesicular side. The chain crosses the membrane as a helical span at residues 426–446 (LTLLLFIARAFISGGFQAAYV). At 447–457 (YTPEVYPTATR) the chain is on the cytoplasmic side. Residues 458 to 478 (ALGLGTCSGMARVGALITPFI) form a helical membrane-spanning segment. Topologically, residues 479 to 489 (AQVMLESSVYL) are vesicular. The helical transmembrane segment at 490–510 (TLAVYSGCCLLAALASCFLPI) threads the bilayer. The Cytoplasmic segment spans residues 511-548 (ETKGRGLQESSHREWGQEMVGRGAHGTGVARSNSGSQE). The interval 528–548 (EMVGRGAHGTGVARSNSGSQE) is disordered. Serine 542 is subject to Phosphoserine.

This sequence belongs to the major facilitator superfamily. In terms of tissue distribution, detected in brain and adrenal medulla.

Its subcellular location is the cytoplasmic vesicle. It localises to the secretory vesicle. The protein resides in the synaptic vesicle membrane. The sequence is that of Synaptic vesicle 2-related protein (SVOP) from Bos taurus (Bovine).